The sequence spans 396 residues: Acetate kinase (396 aa).

Asn-8 provides a ligand contact to Mg(2+). Lys-15 serves as a coordination point for ATP. Arg-89 contributes to the substrate binding site. Asp-146 (proton donor/acceptor) is an active-site residue. Residues 206–210, 283–285, and 331–335 each bind ATP; these read HIGNG, DMR, and GIGEN. Glu-383 is a Mg(2+) binding site.

The protein belongs to the acetokinase family. In terms of assembly, homodimer. Requires Mg(2+) as cofactor. The cofactor is Mn(2+).

Its subcellular location is the cytoplasm. The catalysed reaction is acetate + ATP = acetyl phosphate + ADP. Its pathway is metabolic intermediate biosynthesis; acetyl-CoA biosynthesis; acetyl-CoA from acetate: step 1/2. In terms of biological role, catalyzes the formation of acetyl phosphate from acetate and ATP. Can also catalyze the reverse reaction. The polypeptide is Acetate kinase (Streptococcus gordonii (strain Challis / ATCC 35105 / BCRC 15272 / CH1 / DL1 / V288)).